The primary structure comprises 235 residues: Ribitol-5-phosphate cytidylyltransferase (235 aa).

CTP contacts are provided by residues 7–10, 82–88, and serine 113; these read LAGG and GADRNTS.

The protein belongs to the IspD/TarI cytidylyltransferase family. TarI subfamily.

It catalyses the reaction D-ribitol 5-phosphate + CTP + H(+) = CDP-L-ribitol + diphosphate. It functions in the pathway cell wall biogenesis; poly(ribitol phosphate) teichoic acid biosynthesis. Its function is as follows. Catalyzes the transfer of the cytidylyl group of CTP to D-ribitol 5-phosphate. The sequence is that of Ribitol-5-phosphate cytidylyltransferase from Streptococcus pneumoniae (strain ATCC 700669 / Spain 23F-1).